Reading from the N-terminus, the 361-residue chain is Transcription factor MafA (361 aa).

Position 14 is a phosphoserine (Ser-14). Lys-32 participates in a covalent cross-link: Glycyl lysine isopeptide (Lys-Gly) (interchain with G-Cter in SUMO2). Disordered regions lie at residues 40–105 (RFCH…VGGA) and 175–228 (GGAD…AGHH). Positions 46-76 (PPGSLSSTPLSTPCSSVPSSPSFCAPSPGTG) are enriched in low complexity. Phosphoserine is present on Ser-49. Thr-53 and Thr-57 each carry phosphothreonine. A phosphoserine mark is found at Ser-61 and Ser-65. Residues 183–211 (GHHHGAHHTAHHHHSAHHHHHHHHHHGGS) are compositionally biased toward basic residues. The span at 212 to 226 (GHHGGGAGHGGGGAG) shows a compositional bias: gly residues. A basic motif region spans residues 262–287 (RLKQKRRTLKNRGYAQSCRFKRVQQR). Residues 262–325 (RLKQKRRTLK…DLYKEKYEKL (64 aa)) form the bZIP domain. The tract at residues 290–311 (LESEKCQLQSQVEQLKLEVGRL) is leucine-zipper. The interval 324-361 (KLAGRGGPGGAGGAGFPREPSPAQAGPGAAKGAPDFFL) is disordered. Residues 327 to 338 (GRGGPGGAGGAG) are compositionally biased toward gly residues. A compositionally biased stretch (low complexity) spans 345–361 (PAQAGPGAAKGAPDFFL).

This sequence belongs to the bZIP family. As to quaternary structure, forms homodimers. Monomers and dimers are able to bind DNA, but the off-rate is faster for monomers. Interacts with NEUROD1 and PDX1. May interact with MAFB, FOS, JUN and PCAF. Ubiquitinated, leading to its degradation by the proteasome. In terms of processing, phosphorylated at tyrosines.

It is found in the nucleus. Transcription factor that activates insulin gene expression. Acts synergistically with NEUROD1/BETA2 and PDX1. Binds the insulin enhancer C1/RIPE3b element. Binds to consensus TRE-type MARE 5'-TGCTGACTCAGCA-3' DNA sequence. In Rattus norvegicus (Rat), this protein is Transcription factor MafA (Mafa).